A 335-amino-acid chain; its full sequence is Mitochondrial carrier protein CoAc2 (335 aa).

6 helical membrane-spanning segments follow: residues 12–32 (SGPGLPLAVRELLAGGVAGGV), 75–95 (FYRGNGASVARIVPYAALHYM), 119–139 (LVAGSIAGGTAVICTYPLDLV), 187–207 (GMAPSLYGIFPYSGLKFYFYE), 225–242 (LGCGSVAGLLGQTITYPL), and 280–302 (LFSGLSINYLKVVPSVAIGFTVY). 3 Solcar repeats span residues 17-103 (PLAV…YRRW), 113-212 (QGPV…MKSH), and 219-308 (KGII…MKVC).

Belongs to the mitochondrial carrier (TC 2.A.29) family. In terms of tissue distribution, expressed throughout the plant.

The protein resides in the mitochondrion inner membrane. In terms of biological role, required for the accumulation of coenzyme A in the mitochondrial matrix. The protein is Mitochondrial carrier protein CoAc2 of Zea mays (Maize).